The following is a 525-amino-acid chain: GMP synthase [glutamine-hydrolyzing] (525 aa).

The region spanning 12-206 (RILIIDFGSQ…THGICGCGGD (195 aa)) is the Glutamine amidotransferase type-1 domain. The Nucleophile role is filled by Cys-90. Active-site residues include His-180 and Glu-182. The GMPS ATP-PPase domain occupies 207–399 (WTMAAFKDQA…LGLPDEMVGR (193 aa)). ATP is bound at residue 234–240 (SGGVDSS).

In terms of assembly, homodimer.

It catalyses the reaction XMP + L-glutamine + ATP + H2O = GMP + L-glutamate + AMP + diphosphate + 2 H(+). It functions in the pathway purine metabolism; GMP biosynthesis; GMP from XMP (L-Gln route): step 1/1. Its function is as follows. Catalyzes the synthesis of GMP from XMP. The protein is GMP synthase [glutamine-hydrolyzing] of Rhodospirillum rubrum (strain ATCC 11170 / ATH 1.1.1 / DSM 467 / LMG 4362 / NCIMB 8255 / S1).